Consider the following 59-residue polypeptide: Bacteriocin curvacin-A (59 aa).

The propeptide occupies 1–18; sequence MNNVKELSMTELQTITGG. Cysteines 28 and 33 form a disulfide.

The protein belongs to the bacteriocin class IIA/YGNGV family.

The protein localises to the secreted. In terms of biological role, bactericidal activity; inhibits closely related Lactobacilli, Listeria monocytogenes and ivanovvi, Enterococcus faecalis, Carnobacterium sp and Brocothrix thermosphacta. The sequence is that of Bacteriocin curvacin-A (curA) from Latilactobacillus curvatus (Lactobacillus curvatus).